Reading from the N-terminus, the 141-residue chain is Hemoglobin subunit alpha-1 (141 aa).

The region spanning V1–R141 is the Globin domain. H58 is an O2 binding site. H87 lines the heme b pocket.

This sequence belongs to the globin family. As to quaternary structure, heterotetramer of two alpha chains and two beta chains. In terms of tissue distribution, red blood cells.

Involved in oxygen transport from the lung to the various peripheral tissues. The chain is Hemoglobin subunit alpha-1 from Stercorarius maccormicki (South polar skua).